Reading from the N-terminus, the 570-residue chain is NADH-ubiquinone oxidoreductase chain 5 (570 aa).

A run of 16 helical transmembrane segments spans residues F2–F22, G27–L47, L56–S76, F77–V97, P109–V129, L134–F154, V179–L199, L221–V241, V251–M271, L285–Q305, I311–G330, V335–I357, F380–Y400, A417–L437, I476–L496, and L524–F544.

The protein belongs to the complex I subunit 5 family.

The protein localises to the mitochondrion inner membrane. The enzyme catalyses a ubiquinone + NADH + 5 H(+)(in) = a ubiquinol + NAD(+) + 4 H(+)(out). In terms of biological role, core subunit of the mitochondrial membrane respiratory chain NADH dehydrogenase (Complex I) that is believed to belong to the minimal assembly required for catalysis. Complex I functions in the transfer of electrons from NADH to the respiratory chain. The immediate electron acceptor for the enzyme is believed to be ubiquinone. The polypeptide is NADH-ubiquinone oxidoreductase chain 5 (ND5) (Paramecium tetraurelia).